A 360-amino-acid polypeptide reads, in one-letter code: Glutamate 5-kinase (360 aa).

Position 7 (Lys-7) interacts with ATP. Substrate-binding residues include Ser-47, Asp-134, and Asn-146. ATP-binding positions include 166 to 167 and 208 to 214; these read TD and TGGIKTK. The PUA domain occupies 273-344; it reads VGEIHLDDGA…IGINSRSETT (72 aa).

This sequence belongs to the glutamate 5-kinase family.

It is found in the cytoplasm. The catalysed reaction is L-glutamate + ATP = L-glutamyl 5-phosphate + ADP. It functions in the pathway amino-acid biosynthesis; L-proline biosynthesis; L-glutamate 5-semialdehyde from L-glutamate: step 1/2. Functionally, catalyzes the transfer of a phosphate group to glutamate to form L-glutamate 5-phosphate. This Prochlorococcus marinus (strain NATL2A) protein is Glutamate 5-kinase.